The chain runs to 380 residues: Magnesium-protoporphyrin IX monomethyl ester [oxidative] cyclase 1 (380 aa).

It belongs to the AcsF family. Requires Fe cation as cofactor.

The enzyme catalyses Mg-protoporphyrin IX 13-monomethyl ester + 3 NADPH + 3 O2 + 2 H(+) = 3,8-divinyl protochlorophyllide a + 3 NADP(+) + 5 H2O. The protein operates within porphyrin-containing compound metabolism; chlorophyll biosynthesis (light-independent). Its function is as follows. Catalyzes the formation of the isocyclic ring in chlorophyll biosynthesis. Mediates the cyclase reaction, which results in the formation of divinylprotochlorophyllide (Pchlide) characteristic of all chlorophylls from magnesium-protoporphyrin IX 13-monomethyl ester (MgPMME). In Thermosynechococcus vestitus (strain NIES-2133 / IAM M-273 / BP-1), this protein is Magnesium-protoporphyrin IX monomethyl ester [oxidative] cyclase 1.